A 182-amino-acid polypeptide reads, in one-letter code: Lipoprotein signal peptidase (182 aa).

4 helical membrane-spanning segments follow: residues 12-32 (FLWI…TVID), 40-60 (IQVL…AFSF), 70-90 (WFFT…LKQS), and 97-117 (LPVA…DRLV). Active-site residues include D123 and D141. Residues 136–156 (AFNIADSAIFIGAALLIIDMF) form a helical membrane-spanning segment. The interval 161-182 (KKSEENGAESKAGSANSSETIK) is disordered. The segment covering 173–182 (GSANSSETIK) has biased composition (polar residues).

The protein belongs to the peptidase A8 family.

The protein resides in the cell inner membrane. The enzyme catalyses Release of signal peptides from bacterial membrane prolipoproteins. Hydrolyzes -Xaa-Yaa-Zaa-|-(S,diacylglyceryl)Cys-, in which Xaa is hydrophobic (preferably Leu), and Yaa (Ala or Ser) and Zaa (Gly or Ala) have small, neutral side chains.. It functions in the pathway protein modification; lipoprotein biosynthesis (signal peptide cleavage). This protein specifically catalyzes the removal of signal peptides from prolipoproteins. This is Lipoprotein signal peptidase from Alteromonas mediterranea (strain DSM 17117 / CIP 110805 / LMG 28347 / Deep ecotype).